Reading from the N-terminus, the 309-residue chain is Protein FdhE (309 aa).

It belongs to the FdhE family.

The protein resides in the cytoplasm. Necessary for formate dehydrogenase activity. The chain is Protein FdhE from Escherichia coli (strain K12 / MC4100 / BW2952).